A 92-amino-acid polypeptide reads, in one-letter code: Acylphosphatase (92 aa).

The Acylphosphatase-like domain maps to 5 to 92 (RWHLLVSGKV…QEFTDFRTTH (88 aa)). Catalysis depends on residues R20 and N38.

It belongs to the acylphosphatase family.

The enzyme catalyses an acyl phosphate + H2O = a carboxylate + phosphate + H(+). This chain is Acylphosphatase (acyP), found in Marinobacter nauticus (strain ATCC 700491 / DSM 11845 / VT8) (Marinobacter aquaeolei).